The sequence spans 286 residues: MEQVIGVIGGSGLYEMEGLQDVRSIVVETPFGAPSDEFVTGVLDGVRMVFLPRHGRGHRLLPTEVNYRANIYGMKKLGVTRIISVSAVGSMREEIVPGHIVIPDQFIDRTNATRANTFFGNGVVAHIQFADPVCADLSADLYAAAQEAGATVHRGGTYICMEGPAFSTRAESNLYRSFGVSVIGMTNIPEAKLAREAEICYGVIALATDYDCWHESHDDVSVDAIIAIIKQNVAMAKSIIRNAVRRIDRERNCPCASALRYAIITDKAAIPAETKERLDLIIGSYV.

Residues Ser-11, Arg-53 to His-54, and Ser-86 to Ala-87 contribute to the phosphate site. Met-185 contacts substrate. Residue Thr-186 coordinates phosphate. Residue Asp-209 to Asp-211 coordinates substrate.

It belongs to the PNP/MTAP phosphorylase family. MTAP subfamily. In terms of assembly, homohexamer. Dimer of a homotrimer.

It catalyses the reaction S-methyl-5'-thioadenosine + phosphate = 5-(methylsulfanyl)-alpha-D-ribose 1-phosphate + adenine. It functions in the pathway amino-acid biosynthesis; L-methionine biosynthesis via salvage pathway; S-methyl-5-thio-alpha-D-ribose 1-phosphate from S-methyl-5'-thioadenosine (phosphorylase route): step 1/1. Its function is as follows. Catalyzes the reversible phosphorylation of S-methyl-5'-thioadenosine (MTA) to adenine and 5-methylthioribose-1-phosphate. Involved in the breakdown of MTA, a major by-product of polyamine biosynthesis. Responsible for the first step in the methionine salvage pathway after MTA has been generated from S-adenosylmethionine. Has broad substrate specificity with 6-aminopurine nucleosides as preferred substrates. The chain is S-methyl-5'-thioadenosine phosphorylase from Geobacter sulfurreducens (strain ATCC 51573 / DSM 12127 / PCA).